Reading from the N-terminus, the 313-residue chain is Ribosomal RNA small subunit methyltransferase H (313 aa).

S-adenosyl-L-methionine contacts are provided by residues 33–35, Asp53, Phe80, Asp101, and Gln108; that span reads GGH. Positions 282 to 313 are disordered; it reads LVHNKPLTPSEAEIEQNPRARSAKLRVAQKLA.

It belongs to the methyltransferase superfamily. RsmH family.

Its subcellular location is the cytoplasm. The catalysed reaction is cytidine(1402) in 16S rRNA + S-adenosyl-L-methionine = N(4)-methylcytidine(1402) in 16S rRNA + S-adenosyl-L-homocysteine + H(+). Functionally, specifically methylates the N4 position of cytidine in position 1402 (C1402) of 16S rRNA. In Magnetococcus marinus (strain ATCC BAA-1437 / JCM 17883 / MC-1), this protein is Ribosomal RNA small subunit methyltransferase H.